The primary structure comprises 207 residues: uncharacterized protein (207 aa).

The protein resides in the mitochondrion. This is an uncharacterized protein from Marchantia polymorpha (Common liverwort).